The sequence spans 1088 residues: Serine/threonine-protein kinase LATS2 (1088 aa).

Positions 24–49 are disordered; that stretch reads EGLKQPSKSSVQGLPAGPNSDTSLDA. A Phosphoserine; by AURKA modification is found at Ser-83. One can recognise a UBA domain in the interval 98 to 139; it reads EVNRQMLQELVNAGCDQEMAGRALKQTGSRSIEAALEYISKM. The segment at 101 to 141 is interaction with ubiquitinated AMOTL2; that stretch reads RQMLQELVNAGCDQEMAGRALKQTGSRSIEAALEYISKMGY. The span at 271–280 shows a compositional bias: polar residues; the sequence is RSPSFQSKTP. Positions 271-323 are disordered; that stretch reads RSPSFQSKTPPETGGYASLPTKGQGGPPGAGLAFPPPAAGLYVPHPHHKQAGP. A Phosphothreonine modification is found at Thr-279. The residue at position 380 (Ser-380) is a Phosphoserine. 2 disordered regions span residues 383-428 and 454-483; these read KPGL…SLPA and PQTA…AAEG. The span at 404-413 shows a compositional bias: polar residues; it reads SRTNSFNSHQ. Over residues 466–478 the composition is skewed to pro residues; the sequence is VPAPAPAPAPAPA. The short motif at 515–518 is the PPxY motif element; that stretch reads PPPY. Positions 543-592 are disordered; that stretch reads SLRAGPNEPEGGDKSRKSAKGDKGGKDKKQIQTSPVPVRKNSRDEEKRES. Residues 553–572 are compositionally biased toward basic and acidic residues; that stretch reads GGDKSRKSAKGDKGGKDKKQ. Ser-576 is modified (phosphoserine). A compositionally biased stretch (basic and acidic residues) spans 583-592; that stretch reads NSRDEEKRES. The 306-residue stretch at 668-973 folds into the Protein kinase domain; that stretch reads FVKIKTLGIG…ADDLKAHPFF (306 aa). ATP-binding positions include 674–682 and Lys-697; that span reads LGIGAFGEV. The Proton acceptor role is filled by Asp-791. The 79-residue stretch at 974 to 1052 folds into the AGC-kinase C-terminal domain; the sequence is SAIDFSSDIR…RRFFDDNGYP (79 aa). Residues 994–1022 are disordered; the sequence is SHPMDTSNFDPVDEESPWNDASEGSTKAW. A Phosphothreonine modification is found at Thr-1041. The tract at residues 1056 to 1088 is disordered; it reads PKPSGAEASQAESSDLESSDLVDQTEGCQPVYV.

The protein belongs to the protein kinase superfamily. AGC Ser/Thr protein kinase family. As to quaternary structure, interacts with and is phosphorylated by AURKA. Binds to AR. Interacts with AJUBA during mitosis and this complex regulates organization of the spindle apparatus through recruitment of gamma-tubulin to the centrosome. Interacts (via PPxY motif) with YAP1 (via WW domains). Interacts with MOB1A and MOB1B. Interacts with LIMD1, WTIP and AJUBA. Interacts with SNAI1. Interacts with WWC1, WWC2 and WWC3 (via their WW domains). Interacts (via UBA domain) with ubiquitinated AMOTL2; the interaction promotes LATS2 phosphorylation of YAP1. The cofactor is Mg(2+). In terms of processing, autophosphorylated and phosphorylated during M-phase and the G1/S-phase of the cell cycle. Phosphorylated and activated by STK3/MST2. Phosphorylated by MAP4Ks; in parallel to STK3/MST2 and resulting to its activation. Phosphorylation by NUAK2 may regulate its activity in phosphorylation and inactivation YAP1. Expressed at high levels in heart and skeletal muscle and at lower levels in all other tissues examined.

Its subcellular location is the cytoplasm. It is found in the cytoskeleton. The protein resides in the microtubule organizing center. The protein localises to the centrosome. It localises to the spindle pole. Its subcellular location is the nucleus. The catalysed reaction is L-seryl-[protein] + ATP = O-phospho-L-seryl-[protein] + ADP + H(+). It catalyses the reaction L-threonyl-[protein] + ATP = O-phospho-L-threonyl-[protein] + ADP + H(+). Negative regulator of YAP1 in the Hippo signaling pathway that plays a pivotal role in organ size control and tumor suppression by restricting proliferation and promoting apoptosis. The core of this pathway is composed of a kinase cascade wherein STK3/MST2 and STK4/MST1, in complex with its regulatory protein SAV1, phosphorylates and activates LATS1/2 in complex with its regulatory protein MOB1, which in turn phosphorylates and inactivates YAP1 oncoprotein and WWTR1/TAZ. Phosphorylation of YAP1 by LATS2 inhibits its translocation into the nucleus to regulate cellular genes important for cell proliferation, cell death, and cell migration. Also phosphorylates YAP1 in response to cell contact inhibition-driven WWP1 ubiquitination of AMOTL2, which results in LATS2 activation. Acts as a tumor suppressor which plays a critical role in centrosome duplication, maintenance of mitotic fidelity and genomic stability. Negatively regulates G1/S transition by down-regulating cyclin E/CDK2 kinase activity. Negative regulator of the androgen receptor. Phosphorylates SNAI1 in the nucleus leading to its nuclear retention and stabilization, which enhances its epithelial-mesenchymal transition and tumor cell invasion/migration activities. This tumor-promoting activity is independent of its effects upon YAP1 or WWTR1/TAZ. Acts as an activator of the NLRP3 inflammasome by mediating phosphorylation of 'Ser-265' of NLRP3 following NLRP3 palmitoylation, promoting NLRP3 activation by NEK7. In Homo sapiens (Human), this protein is Serine/threonine-protein kinase LATS2.